A 275-amino-acid polypeptide reads, in one-letter code: Phosphonoacetaldehyde hydrolase (275 aa).

Asp-15 serves as the catalytic Nucleophile. 2 residues coordinate Mg(2+): Asp-15 and Ala-17. Lys-56 acts as the Schiff-base intermediate with substrate in catalysis. Mg(2+) is bound at residue Asp-189.

It belongs to the HAD-like hydrolase superfamily. PhnX family. Homodimer. Mg(2+) is required as a cofactor.

The catalysed reaction is phosphonoacetaldehyde + H2O = acetaldehyde + phosphate + H(+). Involved in phosphonate degradation. The chain is Phosphonoacetaldehyde hydrolase from Pseudomonas fluorescens (strain Pf0-1).